A 1286-amino-acid chain; its full sequence is MSHLVDPTSGDLPVRDIDAIPLVLPASKGKNMKTQPPLSRMNREELEDSFFRLREDHMLVKELSWKQQDEIKRLRTTLLRLTAAGRDLRVAEEAAPLSETARRGQKAGWRQRLSMHQRPQMHRLQGHFHCVGPASPRRAQPRVQVGHRQLHTAGAPVPEKPKRGPRDRLSYTAPPSFKEHATNENRGEVASKPSELVSGSNSIISFSSVISMAKPIGLCMPNSAHIMASNTMQVEEPPKSPEKMWPKDENFEQRSSLECAQKAAELRASIKEKVELIRLKKLLHERNASLVMTKAQLTEVQEAYETLLQKNQGILSAAHEALLKQVNELRAELKEESKKAVSLKSQLEDVSILQMTLKEFQERVEDLEKERKLLNDNYDKLLESMLDSSDSSSQPHWSNELIAEQLQQQVSQLQDQLDAELEDKRKVLLELSREKAQNEDLKLEVTNILQKHKQEVELLQNAATISQPPDRQSEPATHPAVLQENTQIEPSEPKNQEEKKLSQVLNELQVSHAETTLELEKTRDMLILQRKINVCYQEELEAMMTKADNDNRDHKEKLERLTRLLDLKNNRIKQLEGILRSHDLPTSEQLKDVAYGTRPLSLCLETLPAHGDEDKVDISLLHQGENLFELHIHQAFLTSAALAQAGDTQPTTFCTYSFYDFETHCTPLSVGPQPLYDFTSQYVMETDSLFLHYLQEASARLDIHQAMASEHSTLAAGWICFDRVLETVEKVHGLATLIGAGGEEFGVLEYWMRLRFPIKPSLQACNKRKKAQVYLSTDVLGGRKAQEEEFRSESWEPQNELWIEITKCCGLRSRWLGTQPSPYAVYRFFTFSDHDTAIIPASNNPYFRDQARFPVLVTSDLDHYLRREALSIHVFDDEDLEPGSYLGRARVPLLPLAKNESIKGDFNLTDPAEKPNGSIQVQLDWKFPYIPPESFLKPEAQTKGKDTKDSSKISSEEEKASFPSQDQMASPEVPIEAGQYRSKRKPPHGGERKEKEHQVVSYSRRKHGKRIGVQGKNRMEYLSLNILNGNTPEQVNYTEWKFSETNSFIGDGFKNQHEEEEMTLSHSALKQKEPLHPVNDKESSEQGSEVSEAQTTDSDDVIVPPMSQKYPKADSEKMCIEIVSLAFYPEAEVMSDENIKQVYVEYKFYDLPLSETETPVSLRKPRAGEEIHFHFSKVIDLDPQEQQGRRRFLFDMLNGQDPDQGHLKFTVVSDPLDEEKKECEEVGYAYLQLWQILESGRDILEQELDIVSPEDLATPIGRLKVSLQAAAVLHAIYKEMTEDLFS.

Residues 144 to 193 form a disordered region; it reads QVGHRQLHTAGAPVPEKPKRGPRDRLSYTAPPSFKEHATNENRGEVASKP. Composition is skewed to basic and acidic residues over residues 159–169 and 177–189; these read EKPKRGPRDRL and FKEH…RGEV. Residues 294–584 adopt a coiled-coil conformation; the sequence is KAQLTEVQEA…LEGILRSHDL (291 aa). One can recognise a C2 domain in the interval 781 to 906; that stretch reads GGRKAQEEEF…AKNESIKGDF (126 aa). Disordered regions lie at residues 934-1008 and 1058-1108; these read SFLK…RKHG and EEEE…PMSQ. Basic and acidic residues-rich tracts occupy residues 940-960, 988-998, and 1070-1084; these read AQTK…EEKA, HGGERKEKEHQ, and KQKE…KESS. The segment covering 1085 to 1096 has biased composition (polar residues); the sequence is EQGSEVSEAQTT. Positions 1091 to 1281 are interaction with RPGR; it reads SEAQTTDSDD…VLHAIYKEMT (191 aa).

This sequence belongs to the RPGRIP1 family. In terms of assembly, forms homodimers and elongated homopolymers. Interacts with RPGR. Interacts with NPHP4. Interacts with NEK4. Interacts with SPATA7. Interacts with CEP290/NPHP6; mediating the association between RPGR and CEP290/NPHP6. As to expression, strong expression in retina, with weaker expression in testis. Expressed in other neurons such as amacrine cells. Colocalizes with RGPR in the outer segment of rod photoreceptors and cone outer segments.

The protein resides in the cell projection. It is found in the cilium. In terms of biological role, may function as scaffolding protein. Required for normal location of RPGR at the connecting cilium of photoreceptor cells. Required for normal disk morphogenesis and disk organization in the outer segment of photoreceptor cells and for survival of photoreceptor cells. The protein is X-linked retinitis pigmentosa GTPase regulator-interacting protein 1 (RPGRIP1) of Homo sapiens (Human).